Consider the following 420-residue polypeptide: MSNTQKQLALAKAAKKSVNTADTEEKNRALLAMADSLEAATADILAANRQDLEAAAGNIPESMTDRLLLDGKRICAMADGIRAVAALPNPVGEILETSTLPNGLEIVKKRVAMGVIGIIYESRPNVTSDAAALALKSGSAVVLRSGKDAFQSARAIVAALKTGLAQTRIDPDALQLIEDTGRESSYEMMRAKDYLDLLIPRGGAGLIRAVVENAVVPVIETGTGIVHIYIDKDADWDKALRIVYNAKTSRPSVCNSMEVLLVHEDIAADFLPKLERLLVRDRIEAGLPPIRFRLDPQAARHIGGEAAGADDFDTEFLDYILAVKTVASVEEAVWHIETHSTHHSDGIVTENRHAADYFTTHIDSAAVYVNASTRFTDGGEFGLGCEMGISTQKLHARGPMGLKELTSYKYIVQGTGQVRE.

The protein belongs to the gamma-glutamyl phosphate reductase family.

The protein resides in the cytoplasm. It carries out the reaction L-glutamate 5-semialdehyde + phosphate + NADP(+) = L-glutamyl 5-phosphate + NADPH + H(+). It functions in the pathway amino-acid biosynthesis; L-proline biosynthesis; L-glutamate 5-semialdehyde from L-glutamate: step 2/2. Functionally, catalyzes the NADPH-dependent reduction of L-glutamate 5-phosphate into L-glutamate 5-semialdehyde and phosphate. The product spontaneously undergoes cyclization to form 1-pyrroline-5-carboxylate. The chain is Gamma-glutamyl phosphate reductase from Neisseria meningitidis serogroup B (strain ATCC BAA-335 / MC58).